Consider the following 185-residue polypeptide: Large ribosomal subunit protein uL22 (185 aa).

Belongs to the universal ribosomal protein uL22 family. In terms of assembly, component of the large ribosomal subunit. Mature ribosomes consist of a small (40S) and a large (60S) subunit. The 40S subunit contains about 32 different proteins and 1 molecule of RNA (18S). The 60S subunit contains 45 different proteins and 3 molecules of RNA (25S, 5.8S and 5S).

Its subcellular location is the cytoplasm. Component of the ribosome, a large ribonucleoprotein complex responsible for the synthesis of proteins in the cell. The small ribosomal subunit (SSU) binds messenger RNAs (mRNAs) and translates the encoded message by selecting cognate aminoacyl-transfer RNA (tRNA) molecules. The large subunit (LSU) contains the ribosomal catalytic site termed the peptidyl transferase center (PTC), which catalyzes the formation of peptide bonds, thereby polymerizing the amino acids delivered by tRNAs into a polypeptide chain. The nascent polypeptides leave the ribosome through a tunnel in the LSU and interact with protein factors that function in enzymatic processing, targeting, and the membrane insertion of nascent chains at the exit of the ribosomal tunnel. The polypeptide is Large ribosomal subunit protein uL22 (Candida albicans (strain SC5314 / ATCC MYA-2876) (Yeast)).